The following is a 199-amino-acid chain: Recombination protein RecR (199 aa).

A C4-type zinc finger spans residues 56–71 (CSICFNVSQDDQCRIC). Positions 79-174 (SVLCVVEEYK…RVTRLASGLP (96 aa)) constitute a Toprim domain.

The protein belongs to the RecR family.

Functionally, may play a role in DNA repair. It seems to be involved in an RecBC-independent recombinational process of DNA repair. It may act with RecF and RecO. This is Recombination protein RecR from Nocardioides sp. (strain ATCC BAA-499 / JS614).